A 249-amino-acid polypeptide reads, in one-letter code: Probable calcium-binding protein CML12 (249 aa).

The segment covering 1–24 (MQSQRERPREDRVHEETRGADHAH) has biased composition (basic and acidic residues). The segment at 1 to 80 (MQSQRERPRE…RKGKAPATAE (80 aa)) is disordered. Residues 30-56 (AAAAASATATETATRTMSLHAGGVVVV) are compositionally biased toward low complexity. A compositionally biased stretch (basic and acidic residues) spans 57–70 (DGKEKGKKEEGEGK). 4 consecutive EF-hand domains span residues 91 to 126 (EQLR…LGLR), 128 to 163 (AAGD…LILG), 171 to 206 (VDQA…MGHP), and 207 to 242 (ICYA…SALD). The Ca(2+) site is built by Asp-104, Asp-106, Asp-108, Ser-110, Glu-115, Asp-141, Asp-143, Asn-145, Thr-147, Glu-152, Asp-184, Asp-186, Asn-188, Glu-195, Asp-220, Asp-222, Asp-224, and Glu-231.

Potential calcium sensor. The protein is Probable calcium-binding protein CML12 (CML12) of Oryza sativa subsp. japonica (Rice).